A 288-amino-acid polypeptide reads, in one-letter code: Proteasome assembly chaperone 1 (288 aa).

The tract at residues 1 to 33 (MATFFGEVQSVFSRAVDEEEEDEDDDEEEEEDR) is disordered. Residues 17-33 (DEEEEDEDDDEEEEEDR) are compositionally biased toward acidic residues.

It belongs to the PSMG1 family. In terms of assembly, forms a heterodimer with psmg2. Degraded by the proteasome upon completion of 20S proteasome maturation.

Its subcellular location is the cytoplasm. The protein resides in the endoplasmic reticulum. In terms of biological role, chaperone protein which promotes assembly of the 20S proteasome as part of a heterodimer with psmg2. The polypeptide is Proteasome assembly chaperone 1 (Xenopus laevis (African clawed frog)).